Consider the following 326-residue polypeptide: Glutaminase 2 (326 aa).

Residues S73, N125, E169, N176, Y200, Y252, and V270 each contribute to the substrate site.

This sequence belongs to the glutaminase family. Homotetramer.

The catalysed reaction is L-glutamine + H2O = L-glutamate + NH4(+). The protein is Glutaminase 2 of Bacillus anthracis.